A 202-amino-acid polypeptide reads, in one-letter code: LexA repressor (202 aa).

The H-T-H motif DNA-binding region spans 28–48; it reads RAEIAQRLGFRSPNAAEEHLK. Catalysis depends on for autocatalytic cleavage activity residues S119 and K156.

This sequence belongs to the peptidase S24 family. As to quaternary structure, homodimer.

It catalyses the reaction Hydrolysis of Ala-|-Gly bond in repressor LexA.. Functionally, represses a number of genes involved in the response to DNA damage (SOS response), including recA and lexA. Binds to the 16 bp palindromic sequence 5'-CTGTATATATATACAG-3'. In the presence of single-stranded DNA, RecA interacts with LexA causing an autocatalytic cleavage which disrupts the DNA-binding part of LexA, leading to derepression of the SOS regulon and eventually DNA repair. This Escherichia fergusonii (strain ATCC 35469 / DSM 13698 / CCUG 18766 / IAM 14443 / JCM 21226 / LMG 7866 / NBRC 102419 / NCTC 12128 / CDC 0568-73) protein is LexA repressor.